A 154-amino-acid polypeptide reads, in one-letter code: Ribosome maturation factor RimP (154 aa).

This sequence belongs to the RimP family.

It localises to the cytoplasm. Functionally, required for maturation of 30S ribosomal subunits. This chain is Ribosome maturation factor RimP, found in Desulforudis audaxviator (strain MP104C).